A 480-amino-acid chain; its full sequence is Protein nucleotidyltransferase YdiU (480 aa).

ATP-binding residues include Gly-86, Gly-88, Arg-89, Lys-109, Asp-121, Gly-122, Arg-172, and Arg-179. The active-site Proton acceptor is the Asp-248. Mg(2+) contacts are provided by Asn-249 and Asp-258. Asp-258 lines the ATP pocket.

The protein belongs to the SELO family. The cofactor is Mg(2+). It depends on Mn(2+) as a cofactor.

The enzyme catalyses L-seryl-[protein] + ATP = 3-O-(5'-adenylyl)-L-seryl-[protein] + diphosphate. The catalysed reaction is L-threonyl-[protein] + ATP = 3-O-(5'-adenylyl)-L-threonyl-[protein] + diphosphate. It catalyses the reaction L-tyrosyl-[protein] + ATP = O-(5'-adenylyl)-L-tyrosyl-[protein] + diphosphate. It carries out the reaction L-histidyl-[protein] + UTP = N(tele)-(5'-uridylyl)-L-histidyl-[protein] + diphosphate. The enzyme catalyses L-seryl-[protein] + UTP = O-(5'-uridylyl)-L-seryl-[protein] + diphosphate. The catalysed reaction is L-tyrosyl-[protein] + UTP = O-(5'-uridylyl)-L-tyrosyl-[protein] + diphosphate. Its function is as follows. Nucleotidyltransferase involved in the post-translational modification of proteins. It can catalyze the addition of adenosine monophosphate (AMP) or uridine monophosphate (UMP) to a protein, resulting in modifications known as AMPylation and UMPylation. The polypeptide is Protein nucleotidyltransferase YdiU (Salmonella paratyphi A (strain ATCC 9150 / SARB42)).